Here is an 837-residue protein sequence, read N- to C-terminus: MSLSHLYRDGEGHLDDDDDERENFEITDWDLQNEFNPNRQRHWQTKEEATYGVWAERDSDEERPSFGGKRARDYSAPVNFISAGLKKGAAEEADSEDSDAEEKPVKQEDFPKDLGPKKLKTGGNFKPSQKGFAGGTKSFMDFGSWERHTKGIGQKLLQKMGYVPGRGLGKNAQGIINPIEAKQRKGKGAVGAYGSERTTQSLQDFPVADSEEEAEEEFQKELSQWRKDPSGSKKKPKYSYKTVEELKAKGRVSKKLTAPQKELSQVKVIDMTGREQKVYYSYSQISHKHSVPDEGVPLLAQLPPTAGKEAKVPGFALPELEHNLQLLIERTEQEIIQSDRQLQYERDMVVSLSHELEKTAEVLAHEERVISNLSKVLALVEECEHRMQPHGADPLTLDECARIFETLQDKYYEEYRLADRADLAVAIVYPLVKDYFKDWHPLEDSNYGTQIISKWKSLLENDQLLSHSSQDLSSDAFHRLMWEVWMPFVRNVVAQWQPRNCEPMVDFLDSWAHIIPVWILDNILDQLIFPKLQKEVDNWNPLTDTVPIHSWIHPWLPLMQARLEPLYSPVRSKLSSALQKWHPSDASAKLILQPWKEVLTPGSWEAFMLRNIVPKLGMCLGELVINPHQQHMDAFYWVMDWEGMISVSSLVGLLEKHFFPKWLQVLCSWLSNSPNYEEITKWYLGWKSMFSDQVLAHPSVKDKFNEALDIMNRAVSSNVGAYMQPGARENIAYLTHTERRKDFQYEAMQERREAENMAQRGIGVAASSVPMNFKDLIETKAEEHNIVFMPVIGKRHEGKQLYTFGRIVIYIDRGVVFVQGEKTWVPTSLQSLIDMAK.

Basic and acidic residues-rich tracts occupy residues 1–13 and 44–64; these read MSLSHLYRDGEGH and QTKEEATYGVWAERDSDEERP. Disordered stretches follow at residues 1-21, 34-73, and 85-135; these read MSLSHLYRDGEGHLDDDDDER, EFNPNRQRHWQTKEEATYGVWAERDSDEERPSFGGKRARD, and LKKG…FAGG. The required for interaction with DHX15 stretch occupies residues 1–50; that stretch reads MSLSHLYRDGEGHLDDDDDERENFEITDWDLQNEFNPNRQRHWQTKEEAT. A phosphoserine mark is found at serine 2, serine 59, serine 95, and serine 98. Over residues 91-100 the composition is skewed to acidic residues; sequence EEADSEDSDA. Over residues 101-116 the composition is skewed to basic and acidic residues; the sequence is EEKPVKQEDFPKDLGP. Serine 144 is subject to Phosphoserine. One can recognise a G-patch domain in the interval 149–195; it reads TKGIGQKLLQKMGYVPGRGLGKNAQGIINPIEAKQRKGKGAVGAYGS. Residues 183 to 236 form a disordered region; that stretch reads QRKGKGAVGAYGSERTTQSLQDFPVADSEEEAEEEFQKELSQWRKDPSGSKKKP. Serine 210 bears the Phosphoserine mark. The segment covering 217-231 has biased composition (basic and acidic residues); the sequence is EFQKELSQWRKDPSG. Positions 700-705 match the Nuclear localization signal motif; sequence VKDKFN. Residues 710 to 734 are required for nuclear speckle localization; the sequence is IMNRAVSSNVGAYMQPGARENIAYL.

Belongs to the TFP11/STIP family. In terms of assembly, identified in the spliceosome C complex. Found in the Intron Large (IL) complex, a post-mRNA release spliceosomal complex containing the excised intron, U2, U5 and U6 snRNPs, and splicing factors. Interacts with TUFT1. Interacts with DHX15; indicative for a recruitment of DHX15 to the IL complex. Interacts with GCFC2.

The protein resides in the cytoplasm. Its subcellular location is the nucleus. In terms of biological role, involved in pre-mRNA splicing, specifically in spliceosome disassembly during late-stage splicing events. Intron turnover seems to proceed through reactions in two lariat-intron associated complexes termed Intron Large (IL) and Intron Small (IS). In cooperation with DHX15 seems to mediate the transition of the U2, U5 and U6 snRNP-containing IL complex to the snRNP-free IS complex leading to efficient debranching and turnover of excised introns. May play a role in the differentiation of ameloblasts and odontoblasts or in the forming of the enamel extracellular matrix. The protein is Tuftelin-interacting protein 11 (Tfip11) of Rattus norvegicus (Rat).